A 267-amino-acid polypeptide reads, in one-letter code: Regulatory protein RecX (267 aa).

The protein belongs to the RecX family.

The protein resides in the cytoplasm. Its function is as follows. Modulates RecA activity. The polypeptide is Regulatory protein RecX (Staphylococcus epidermidis (strain ATCC 12228 / FDA PCI 1200)).